The sequence spans 255 residues: Antigen LPMC-61 (255 aa).

A run of 12 repeats spans residues 18 to 48, 49 to 57, 58 to 65, 66 to 78, 79 to 90, 91 to 103, 104 to 140, 141 to 152, 153 to 164, 165 to 172, 173 to 192, and 193 to 210. Residues 18 to 90 are disordered; the sequence is WPERQQQQQP…QQQPQMQQEQ (73 aa). The 12 X approximate tandem repeats, Gln-rich stretch occupies residues 18-210; sequence WPERQQQQQP…QQQQQQQQQQ (193 aa). Residues 149–210 show a composition bias toward low complexity; it reads QQQQWPEQPE…QQQQQQQQQQ (62 aa). Positions 149–224 are disordered; it reads QQQQWPEQPE…DGVGIVVPYL (76 aa).

May be covalently linked by disulfide bonds to other polypeptides to form the 80 kDa antigen.

Functionally, unknown. The Gln-rich tandem repeats may be important for an unknown aspect of the parasitic life cycle. May be an important immunogen. The polypeptide is Antigen LPMC-61 (Eimeria tenella (Coccidian parasite)).